We begin with the raw amino-acid sequence, 298 residues long: GTPase Era (298 aa).

The 169-residue stretch at 8-176 (RCGRIAVIGR…VSDLLALLPE (169 aa)) folds into the Era-type G domain. Residues 16–23 (GRPNVGKS) are G1. Position 16–23 (16–23 (GRPNVGKS)) interacts with GTP. Residues 42-46 (QTTRH) are G2. A G3 region spans residues 63-66 (DTPG). GTP-binding positions include 63–67 (DTPGL) and 125–128 (NKID). The segment at 125–128 (NKID) is G4. Residues 155-157 (VSA) form a G5 region. In terms of domain architecture, KH type-2 spans 199-283 (VREQVMRQLG…FLETWVRVRK (85 aa)).

Belongs to the TRAFAC class TrmE-Era-EngA-EngB-Septin-like GTPase superfamily. Era GTPase family. In terms of assembly, monomer.

It is found in the cytoplasm. The protein resides in the cell inner membrane. Functionally, an essential GTPase that binds both GDP and GTP, with rapid nucleotide exchange. Plays a role in 16S rRNA processing and 30S ribosomal subunit biogenesis and possibly also in cell cycle regulation and energy metabolism. The chain is GTPase Era from Xylella fastidiosa (strain M12).